A 162-amino-acid polypeptide reads, in one-letter code: MAKVHRLMNAVLRLAAAAAAATAAVVMVTSRETTSFFGIQMEAKYSYTPSFIFFVVAYAVAAAYSLLVLAVPAGSALSRLALTTDVVLGMVLAGAVASAGAISDIAKNGNSHAGWLPVCGQIHAYCNHVMAALIAGFVALAVHFVVVMYSLHIVTDVICPCH.

Topologically, residues 1–7 (MAKVHRL) are cytoplasmic. The chain crosses the membrane as a helical span at residues 8-28 (MNAVLRLAAAAAAATAAVVMV). Over 29–50 (TSRETTSFFGIQMEAKYSYTPS) the chain is Extracellular. Residues 51-71 (FIFFVVAYAVAAAYSLLVLAV) traverse the membrane as a helical segment. Residues 72–85 (PAGSALSRLALTTD) lie on the Cytoplasmic side of the membrane. The helical transmembrane segment at 86-106 (VVLGMVLAGAVASAGAISDIA) threads the bilayer. Residues 107 to 128 (KNGNSHAGWLPVCGQIHAYCNH) lie on the Extracellular side of the membrane. A helical transmembrane segment spans residues 129-149 (VMAALIAGFVALAVHFVVVMY). Residues 150–162 (SLHIVTDVICPCH) are Cytoplasmic-facing.

Belongs to the Casparian strip membrane proteins (CASP) family. In terms of assembly, homodimer and heterodimers.

The protein resides in the cell membrane. Involved in cell elongation in rice through dual regulation by brassinolide and auxin. This Oryza sativa subsp. indica (Rice) protein is CASP-like protein BLE3 (BLE3).